A 771-amino-acid chain; its full sequence is Post-GPI attachment to proteins factor 6 (771 aa).

The first 34 residues, M1–A34, serve as a signal peptide directing secretion. Over G35–R545 the chain is Extracellular. N-linked (GlcNAc...) asparagine glycosylation occurs at N144. The tract at residues F322–R343 is disordered. Basic and acidic residues predominate over residues D334–R343. N-linked (GlcNAc...) asparagine glycans are attached at residues N407 and N431. The EGF-like domain occupies P497–T533. Cystine bridges form between C498/C508, C502/C521, and C523/C532. The helical transmembrane segment at A546–V566 threads the bilayer. The Cytoplasmic segment spans residues R567 to R568. The chain crosses the membrane as a helical span at residues F569–A589. Topologically, residues C590 to T605 are extracellular. Residues L606 to A626 traverse the membrane as a helical segment. Topologically, residues R627–K629 are cytoplasmic. Residues T630–L650 traverse the membrane as a helical segment. Residues D651 to R653 lie on the Extracellular side of the membrane. The chain crosses the membrane as a helical span at residues G654–A674. The Cytoplasmic portion of the chain corresponds to Y675–R690. Residues W691–S711 form a helical membrane-spanning segment. The Extracellular segment spans residues M712 to N717. The helical transmembrane segment at Y718 to P738 threads the bilayer. The Cytoplasmic portion of the chain corresponds to P739 to T771.

It belongs to the TMEM8 family. In terms of processing, glycosylated. As to expression, expressed in pancreas, placenta, spleen, liver, kidney, bone marrow, peripheral blood leukocytes and tonsil.

It localises to the cell membrane. It is found in the lysosome membrane. It catalyses the reaction a 1,2-diacyl-sn-glycero-3-phosphocholine + H2O = a 1-acyl-sn-glycero-3-phosphocholine + a fatty acid + H(+). Functionally, involved in the lipid remodeling steps of GPI-anchor maturation. Lipid remodeling steps consist in the generation of 2 saturated fatty chains at the sn-2 position of GPI-anchor proteins (GPI-AP). Has phospholipase A2 activity that removes an acyl-chain at the sn-2 position of GPI-anchors during the remodeling of GPI. Required for the shedding of the GPI-AP CRIPTO, but not CFC1, at the cell surface. Shedding of CRIPTO modulates Nodal signaling by allowing soluble CRIPTO to act as a Nodal coreceptor on other cells. Also indirectly involved in the translocation of RAC1 from the cytosol to the plasma membrane by maintaining the steady state amount of CAV1-enriched plasma membrane subdomains, stabilizing RAC1 at the plasma membrane. In contrast to myomaker (TMEM8C), has no fusogenic activity. This Homo sapiens (Human) protein is Post-GPI attachment to proteins factor 6.